We begin with the raw amino-acid sequence, 246 residues long: Putative KilA-N domain-containing protein L33 (246 aa).

Positions 20–129 (RYTKCQYCDI…AKVSLWIEEW (110 aa)) constitute a KilA-N domain.

This is Putative KilA-N domain-containing protein L33 from Acanthamoeba polyphaga mimivirus (APMV).